The sequence spans 230 residues: Potassium/proton antiporter CemA (230 aa).

The next 4 membrane-spanning stretches (helical) occupy residues 7–27 (LPSLLYLVFIVLLPWGVSSSF), 107–127 (ILHFSTNIICLAILSGSFFLG), 145–165 (LNDSIKAFFILLVTDFFVGFH), and 181–201 (FGWAPNELIFTIFVCSFPVIL).

This sequence belongs to the CemA family.

It localises to the plastid. The protein resides in the chloroplast inner membrane. The catalysed reaction is K(+)(in) + H(+)(out) = K(+)(out) + H(+)(in). In terms of biological role, contributes to K(+)/H(+) antiport activity by supporting proton efflux to control proton extrusion and homeostasis in chloroplasts in a light-dependent manner to modulate photosynthesis. Prevents excessive induction of non-photochemical quenching (NPQ) under continuous-light conditions. Indirectly promotes efficient inorganic carbon uptake into chloroplasts. This chain is Potassium/proton antiporter CemA, found in Triticum aestivum (Wheat).